The following is a 502-amino-acid chain: Histidine--tRNA ligase (502 aa).

This sequence belongs to the class-II aminoacyl-tRNA synthetase family. In terms of assembly, homodimer.

The protein localises to the cytoplasm. The catalysed reaction is tRNA(His) + L-histidine + ATP = L-histidyl-tRNA(His) + AMP + diphosphate + H(+). This Brucella suis biovar 1 (strain 1330) protein is Histidine--tRNA ligase (hisS).